Reading from the N-terminus, the 234-residue chain is 2-C-methyl-D-erythritol 4-phosphate cytidylyltransferase (234 aa).

Belongs to the IspD/TarI cytidylyltransferase family. IspD subfamily.

The enzyme catalyses 2-C-methyl-D-erythritol 4-phosphate + CTP + H(+) = 4-CDP-2-C-methyl-D-erythritol + diphosphate. It functions in the pathway isoprenoid biosynthesis; isopentenyl diphosphate biosynthesis via DXP pathway; isopentenyl diphosphate from 1-deoxy-D-xylulose 5-phosphate: step 2/6. Functionally, catalyzes the formation of 4-diphosphocytidyl-2-C-methyl-D-erythritol from CTP and 2-C-methyl-D-erythritol 4-phosphate (MEP). The polypeptide is 2-C-methyl-D-erythritol 4-phosphate cytidylyltransferase (Pseudomonas paraeruginosa (strain DSM 24068 / PA7) (Pseudomonas aeruginosa (strain PA7))).